Reading from the N-terminus, the 363-residue chain is Galactokinase (363 aa).

Position 16-19 (16-19) interacts with substrate; it reads EHTD. ATP is bound by residues Ser-50 and 103-109; that span reads GSGLSSS. 2 residues coordinate Mg(2+): Ser-109 and Glu-141. Catalysis depends on Asp-153, which acts as the Proton acceptor. Substrate is bound at residue Tyr-205.

Belongs to the GHMP kinase family. GalK subfamily.

Its subcellular location is the cytoplasm. It catalyses the reaction alpha-D-galactose + ATP = alpha-D-galactose 1-phosphate + ADP + H(+). The protein operates within carbohydrate metabolism; galactose metabolism. Its function is as follows. Catalyzes the transfer of the gamma-phosphate of ATP to D-galactose to form alpha-D-galactose-1-phosphate (Gal-1-P). This is Galactokinase from Mycobacterium tuberculosis (strain ATCC 25177 / H37Ra).